A 298-amino-acid polypeptide reads, in one-letter code: Pyridoxal kinase PdxY (298 aa).

Ser17 lines the substrate pocket. Residues Asp119 and Glu156 each contribute to the ATP site. Residue Asp234 coordinates substrate.

It belongs to the pyridoxine kinase family. PdxY subfamily. Homodimer. It depends on Mg(2+) as a cofactor.

The enzyme catalyses pyridoxal + ATP = pyridoxal 5'-phosphate + ADP + H(+). Its pathway is cofactor metabolism; pyridoxal 5'-phosphate salvage; pyridoxal 5'-phosphate from pyridoxal: step 1/1. Functionally, pyridoxal kinase involved in the salvage pathway of pyridoxal 5'-phosphate (PLP). Catalyzes the phosphorylation of pyridoxal to PLP. This Deinococcus radiodurans (strain ATCC 13939 / DSM 20539 / JCM 16871 / CCUG 27074 / LMG 4051 / NBRC 15346 / NCIMB 9279 / VKM B-1422 / R1) protein is Pyridoxal kinase PdxY.